The sequence spans 374 residues: SKP1-interacting partner 15 (374 aa).

The region spanning 3–48 is the F-box domain; the sequence is SSPVNCLPPDSLHQIFSSLPIRDIMICRSVCKFFNQLLTSQCFIEI.

As to quaternary structure, part of a SCF (ASK-cullin-F-box) protein ligase complex. Interacts with SKP1A/ASK1, SKP1B/ASK2, ASK11 and ASK13.

It is found in the nucleus. Its pathway is protein modification; protein ubiquitination. Functionally, component of SCF(ASK-cullin-F-box) E3 ubiquitin ligase complexes, which may mediate the ubiquitination and subsequent proteasomal degradation of target proteins. The protein is SKP1-interacting partner 15 (SKIP15) of Arabidopsis thaliana (Mouse-ear cress).